Here is a 165-residue protein sequence, read N- to C-terminus: Putative 4-hydroxy-4-methyl-2-oxoglutarate aldolase (165 aa).

Substrate contacts are provided by residues glycine 80 to leucine 83 and arginine 102. Aspartate 103 is a binding site for a divalent metal cation.

It belongs to the class II aldolase/RraA-like family. Homotrimer. Requires a divalent metal cation as cofactor.

The enzyme catalyses 4-hydroxy-4-methyl-2-oxoglutarate = 2 pyruvate. It carries out the reaction oxaloacetate + H(+) = pyruvate + CO2. Functionally, catalyzes the aldol cleavage of 4-hydroxy-4-methyl-2-oxoglutarate (HMG) into 2 molecules of pyruvate. Also contains a secondary oxaloacetate (OAA) decarboxylase activity due to the common pyruvate enolate transition state formed following C-C bond cleavage in the retro-aldol and decarboxylation reactions. The protein is Putative 4-hydroxy-4-methyl-2-oxoglutarate aldolase of Cupriavidus necator (strain ATCC 17699 / DSM 428 / KCTC 22496 / NCIMB 10442 / H16 / Stanier 337) (Ralstonia eutropha).